The following is a 148-amino-acid chain: Large ribosomal subunit protein bL9 (148 aa).

It belongs to the bacterial ribosomal protein bL9 family.

Functionally, binds to the 23S rRNA. The sequence is that of Large ribosomal subunit protein bL9 from Dechloromonas aromatica (strain RCB).